A 183-amino-acid polypeptide reads, in one-letter code: Glutathione-regulated potassium-efflux system ancillary protein KefG (183 aa).

The protein belongs to the NAD(P)H dehydrogenase (quinone) family. KefG subfamily. Interacts with KefB.

The protein resides in the cell inner membrane. The catalysed reaction is a quinone + NADH + H(+) = a quinol + NAD(+). It carries out the reaction a quinone + NADPH + H(+) = a quinol + NADP(+). In terms of biological role, regulatory subunit of a potassium efflux system that confers protection against electrophiles. Required for full activity of KefB. This is Glutathione-regulated potassium-efflux system ancillary protein KefG from Yersinia pestis bv. Antiqua (strain Angola).